Reading from the N-terminus, the 188-residue chain is Interferon alpha-2 (188 aa).

An N-terminal signal peptide occupies residues 1–23 (MALTFALLVALLVLSCKSSCSVG). Intrachain disulfides connect cysteine 24/cysteine 121 and cysteine 52/cysteine 161. Threonine 129 is a glycosylation site (O-linked (GalNAc...) threonine).

This sequence belongs to the alpha/beta interferon family. As to quaternary structure, interacts with IFNAR2.

It is found in the secreted. In terms of biological role, produced by macrophages, IFN-alpha have antiviral activities. The chain is Interferon alpha-2 (IFNA2) from Homo sapiens (Human).